The chain runs to 336 residues: Probable allantoicase (336 aa).

It belongs to the allantoicase family.

It catalyses the reaction allantoate + H2O = (S)-ureidoglycolate + urea. It functions in the pathway nitrogen metabolism; (S)-allantoin degradation; (S)-ureidoglycolate from allantoate (aminidohydrolase route): step 1/1. The polypeptide is Probable allantoicase (Acinetobacter baumannii (strain ACICU)).